The primary structure comprises 451 residues: tRNA modification GTPase MnmE (451 aa).

(6S)-5-formyl-5,6,7,8-tetrahydrofolate contacts are provided by arginine 28, glutamate 85, and lysine 124. Residues 220–373 form the TrmE-type G domain; that stretch reads GLYTVLVGPP…LKTRLRTLLL (154 aa). Asparagine 230 is a binding site for K(+). Residues 230–235, 249–255, and 274–277 contribute to the GTP site; these read NVGKSS, TDVPGTT, and DTAG. Residue serine 234 participates in Mg(2+) binding. K(+) contacts are provided by threonine 249, valine 251, and threonine 254. Residue threonine 255 participates in Mg(2+) binding. Lysine 451 lines the (6S)-5-formyl-5,6,7,8-tetrahydrofolate pocket.

It belongs to the TRAFAC class TrmE-Era-EngA-EngB-Septin-like GTPase superfamily. TrmE GTPase family. As to quaternary structure, homodimer. Heterotetramer of two MnmE and two MnmG subunits. K(+) serves as cofactor.

Its subcellular location is the cytoplasm. Functionally, exhibits a very high intrinsic GTPase hydrolysis rate. Involved in the addition of a carboxymethylaminomethyl (cmnm) group at the wobble position (U34) of certain tRNAs, forming tRNA-cmnm(5)s(2)U34. In Xylella fastidiosa (strain 9a5c), this protein is tRNA modification GTPase MnmE.